The chain runs to 453 residues: Ankyrin repeat and SOCS box protein 16 (453 aa).

7 ANK repeats span residues 56–85, 110–139, 142–171, 175–204, 209–238, 242–279, and 283–312; these read CRDP…AANM, KQTA…ELDA, GGRA…KANV, EGMT…SVNV, SEVT…DVAL, QGET…DPQA, and KRHT…SPGV. An SOCS box domain is found at 397–453; the sequence is FYSSALSMENQPRQLQHLARLAVRAQLGSHCRQAAAQLPLPPLLRDYLLLGVEGRIQ.

This sequence belongs to the ankyrin SOCS box (ASB) family.

The protein operates within protein modification; protein ubiquitination. Functionally, may be a substrate-recognition component of a SCF-like ECS (Elongin-Cullin-SOCS-box protein) E3 ubiquitin-protein ligase complex which mediates the ubiquitination and subsequent proteasomal degradation of target proteins. In Mus musculus (Mouse), this protein is Ankyrin repeat and SOCS box protein 16 (Asb16).